The sequence spans 139 residues: Small ribosomal subunit protein uS12 (139 aa).

2 disordered regions span residues 1–22 (MPTI…SKSP) and 37–57 (KTPS…TPKK). Residues 9–19 (RKGRKSHKGKS) are compositionally biased toward basic residues. Aspartate 102 bears the 3-methylthioaspartic acid mark.

This sequence belongs to the universal ribosomal protein uS12 family. In terms of assembly, part of the 30S ribosomal subunit. Contacts proteins S8 and S17. May interact with IF1 in the 30S initiation complex.

Functionally, with S4 and S5 plays an important role in translational accuracy. Interacts with and stabilizes bases of the 16S rRNA that are involved in tRNA selection in the A site and with the mRNA backbone. Located at the interface of the 30S and 50S subunits, it traverses the body of the 30S subunit contacting proteins on the other side and probably holding the rRNA structure together. The combined cluster of proteins S8, S12 and S17 appears to hold together the shoulder and platform of the 30S subunit. This is Small ribosomal subunit protein uS12 from Limosilactobacillus reuteri (strain DSM 20016) (Lactobacillus reuteri).